A 727-amino-acid polypeptide reads, in one-letter code: FACT complex subunit Ssrp1 (727 aa).

Disordered stretches follow at residues 458–565 (AEAR…AFML) and 596–727 (ELKD…EGSD). 2 stretches are compositionally biased toward acidic residues: residues 464 to 479 (EEEDDDGDDSDEESTD) and 487 to 508 (NESDVAEEYDSNVEDDSDDDSD). Positions 510-519 (SGGGGDGGTD) are enriched in gly residues. 3 stretches are compositionally biased toward basic and acidic residues: residues 529–555 (KKNEKKEKTHKEKEKIKKPTKKKDTGK), 596–620 (ELKDKSKWEEAANKDKIRYQEEMRN), and 675–703 (DQEKVKEIPKKKNKSTAEDKDKNSKKSES). Positions 556–622 (PKRGTSAFML…RYQEEMRNYK (67 aa)) form a DNA-binding region, HMG box. Acidic residues predominate over residues 704–727 (EGGDSDDASNASEDDDEEEDEGSD).

Belongs to the SSRP1 family. In terms of assembly, component of the FACT complex, a stable heterodimer of dre4/spt16 and Ssrp.

The protein localises to the nucleus. The protein resides in the chromosome. It localises to the nucleolus. Functionally, component of the FACT complex, a general chromatin factor that acts to reorganize nucleosomes. The FACT complex is involved in multiple processes that require DNA as a template such as mRNA elongation, DNA replication and DNA repair. During transcription elongation the FACT complex acts as a histone chaperone that both destabilizes and restores nucleosomal structure. It facilitates the passage of RNA polymerase II and transcription by promoting the dissociation of one histone H2A-H2B dimer from the nucleosome, then subsequently promotes the reestablishment of the nucleosome following the passage of RNA polymerase II. Binds specifically to single-stranded DNA and RNA with highest affinity for nucleotides G and U. The FACT complex is required for expression of Hox genes. The sequence is that of FACT complex subunit Ssrp1 (Ssrp) from Drosophila pseudoobscura pseudoobscura (Fruit fly).